We begin with the raw amino-acid sequence, 211 residues long: MFIKICGIKTPEELEIVENYGNATGVILECSSKRRIGFETAKNLVNLSNIPVFAVSTTSKVSVWENIIELTGTNYLQMHSDIDQKAIDFIKNEYGCFIMKSFKIPEKSESPENDAEKIISDIESYEVDRILLDTGKGCGQTHDHRISQIIAKKFEIVLAGGLDPDNVFEIVKVVNPFGVDVSSGVENNNSKDEELIKRFCENVKLGENYEM.

It belongs to the TrpF family.

It carries out the reaction N-(5-phospho-beta-D-ribosyl)anthranilate = 1-(2-carboxyphenylamino)-1-deoxy-D-ribulose 5-phosphate. It functions in the pathway amino-acid biosynthesis; L-tryptophan biosynthesis; L-tryptophan from chorismate: step 3/5. This Methanococcus maripaludis (strain C6 / ATCC BAA-1332) protein is N-(5'-phosphoribosyl)anthranilate isomerase.